The following is a 763-amino-acid chain: Ribonucleoside-diphosphate reductase subunit alpha (763 aa).

An ATP-cone domain is found at 5–95; the sequence is LFVTKRNGKK…IFHLRKKAYG (91 aa). Residues lysine 9, 15-21, threonine 55, and lysine 91 each bind ATP; that span reads EKINLDK. Threonine 209 contributes to the GDP binding site. Cysteine 225 and cysteine 462 are joined by a disulfide. DTTP contacts are provided by residues 232-234, arginine 262, and arginine 269; that span reads DNL. Residue asparagine 437 participates in GDP binding. Asparagine 437 acts as the Proton acceptor in catalysis. The Cysteine radical intermediate role is filled by cysteine 439. GDP is bound by residues glutamate 441 and 623 to 625; that span reads ETS. The active-site Proton acceptor is glutamate 441.

Belongs to the ribonucleoside diphosphate reductase large chain family. As to quaternary structure, tetramer of two alpha and two beta subunits.

The catalysed reaction is a 2'-deoxyribonucleoside 5'-diphosphate + [thioredoxin]-disulfide + H2O = a ribonucleoside 5'-diphosphate + [thioredoxin]-dithiol. Its activity is regulated as follows. Under complex allosteric control mediated by deoxynucleoside triphosphates and ATP binding to separate specificity and activation sites on the alpha subunit. The type of nucleotide bound at the specificity site determines substrate preference. It seems probable that ATP makes the enzyme reduce CDP and UDP, dGTP favors ADP reduction and dTTP favors GDP reduction. Stimulated by ATP and inhibited by dATP binding to the activity site. Its function is as follows. Provides the precursors necessary for DNA synthesis. Catalyzes the biosynthesis of deoxyribonucleotides from the corresponding ribonucleotides. This is Ribonucleoside-diphosphate reductase subunit alpha (nrdA) from Buchnera aphidicola subsp. Schizaphis graminum (strain Sg).